A 625-amino-acid polypeptide reads, in one-letter code: Glutamyl-tRNA(Gln) amidotransferase subunit E (625 aa).

It belongs to the GatB/GatE family. GatE subfamily. Heterodimer of GatD and GatE.

The enzyme catalyses L-glutamyl-tRNA(Gln) + L-glutamine + ATP + H2O = L-glutaminyl-tRNA(Gln) + L-glutamate + ADP + phosphate + H(+). Its function is as follows. Allows the formation of correctly charged Gln-tRNA(Gln) through the transamidation of misacylated Glu-tRNA(Gln) in organisms which lack glutaminyl-tRNA synthetase. The reaction takes place in the presence of glutamine and ATP through an activated gamma-phospho-Glu-tRNA(Gln). The GatDE system is specific for glutamate and does not act on aspartate. This is Glutamyl-tRNA(Gln) amidotransferase subunit E from Caldivirga maquilingensis (strain ATCC 700844 / DSM 13496 / JCM 10307 / IC-167).